The chain runs to 932 residues: Protein translocase subunit SecA (932 aa).

Residues Gln-87, 105 to 109, and Asp-515 each bind ATP; that span reads GEGKT. The Zn(2+) site is built by Cys-916, Cys-918, Cys-927, and His-928.

This sequence belongs to the SecA family. In terms of assembly, monomer and homodimer. Part of the essential Sec protein translocation apparatus which comprises SecA, SecYEG and auxiliary proteins SecDF-YajC and YidC. Zn(2+) serves as cofactor.

It localises to the cell inner membrane. The protein localises to the cytoplasm. It catalyses the reaction ATP + H2O + cellular proteinSide 1 = ADP + phosphate + cellular proteinSide 2.. In terms of biological role, part of the Sec protein translocase complex. Interacts with the SecYEG preprotein conducting channel. Has a central role in coupling the hydrolysis of ATP to the transfer of proteins into and across the cell membrane, serving both as a receptor for the preprotein-SecB complex and as an ATP-driven molecular motor driving the stepwise translocation of polypeptide chains across the membrane. The polypeptide is Protein translocase subunit SecA (Burkholderia orbicola (strain MC0-3)).